Consider the following 619-residue polypeptide: MAQKVEAQGGNGGNQWDDGSEYDAVTKIQVAAGGNGIEYVKFTYVKNGQTEEAPLRGVKGRSFEADPFVINHPEEHLVSVEGRYNPEGLILGLTFKSNKKTSDLIGYEDGTPFTLQVQDKKIVGFYGFAGNNLHSLGAYFAPLTNVTPLNAKKLEAKGGDTGDIWDDGVYDNVRKVYVGQAQYGIAFVKFEYVNGSQVVVGDEHGKKTELGVEEFEIDADDYIVYVEGYREKVNGMTSEMITFLSFKTYKGKTSQPIEQRPGIKFVLQGGKIVGFHGRSTDVLDSLGAYISLSPTPNLHGKWTKVDENGDGPGLRCSHDIAQVGNKIYSFGGEFTPNQPIDKHLYVFDIESRTWSISPATGDIPTLSCLGVCMVSIGSTLYVFGGRDASRQYNGFYSFDTTTNEWKLLTPVEEGPTPRSFHSMAADEENVYVFGGVSATARLNTLDSYNIVDKKWFHCSTPGDSLTARGGAGLEVVQGKVWVVYGFNGCEVDDVHYYDPVQDKWTQVETFGVRPSERSVFASAALGKHIVIFGGEIAMDPLAHVGPGQLTDGTFALDTETLQWERLDKFGGEEETPSSRGWTASTTATIGGKKGLVMHGGKAPTNDRFDDLFFYGIDSA.

Jacalin-type lectin domains are found at residues 2-142 (AQKV…YFAP) and 151-292 (AKKL…YISL). Kelch repeat units follow at residues 326–374 (KIYS…VCMV), 379–425 (TLYV…SMAA), 429–478 (NVYV…VVQG), 480–524 (VWVV…ASAA), and 528–583 (HIVI…GWTA). The active-site Proton donor is the Arg-386. A (Z)-N-(sulfonatooxy)alkanimidothioate-binding residues include Arg-386, Ser-419, Arg-441, Gly-470, and Val-519. Arg-441 serves as the catalytic Proton donor. Fe(2+) contacts are provided by Glu-535, Asp-539, and His-543. A (Z)-N-(sulfonatooxy)alkanimidothioate is bound at residue Trp-581.

It belongs to the jacalin lectin family. Requires Fe(2+) as cofactor. As to expression, mainly expressed in roots, and, to a lower extent, in seedlings and leaves. Observed in seeds.

It carries out the reaction a (Z)-N-(sulfonatooxy)alkanimidothioate = a nitrile + sulfur + sulfate. The catalysed reaction is (Z)-phenyl-N-(sulfonatooxy)methanimidothioate = phenylacetonitrile + sulfur + sulfate. The enzyme catalyses (Z)-N-(sulfonatooxy)prop-2-enimidothioate = but-3-enenitrile + sulfur + sulfate. Functionally, specifier protein that contributes to constitutive and herbivore-induced simple nitrile formation. Promotes simple nitriles, but not epithionitrile or thiocyanate formation. Converts allylglucosinolate and benzylglucosinolate (glucotropaeolin) to their corresponding simple nitriles in the presence of myrosinase. The polypeptide is Thiohydroximate-O-sulfate sulfur/sulfate-lyase (nitrile-forming) NSP4 (Arabidopsis thaliana (Mouse-ear cress)).